Here is a 149-residue protein sequence, read N- to C-terminus: MITSSLTSSLQALKLSSPFAHGSTPLSSLSKPNSFPNHRMPALVPVIRAMKTMQGRVVCATSDKTVAVEVVRLAPHPKYKRRVRMKKKYQAHDPDNQFKVGDVVRLEKSRPISKTKSFVALPVIARAARKAEAGGDELLGLPLESQQPA.

A chloroplast-targeting transit peptide spans 1–49; that stretch reads MITSSLTSSLQALKLSSPFAHGSTPLSSLSKPNSFPNHRMPALVPVIRA.

The protein belongs to the universal ribosomal protein uS17 family. In terms of assembly, part of the 30S ribosomal subunit.

It is found in the plastid. The protein resides in the chloroplast. One of the primary rRNA binding proteins, it binds specifically to the 5'-end of 16S ribosomal RNA. Required for optimal plastid performance in terms of photosynthesis and growth. Required for the translation of plastid mRNAs. Plays a critical role in biosynthesis of thylakoid membrane proteins encoded by chloroplast genes. In Arabidopsis thaliana (Mouse-ear cress), this protein is Small ribosomal subunit protein uS17c (RPS17).